The following is a 597-amino-acid chain: Probable serine/threonine-protein kinase DDB_G0281745 (597 aa).

Residues 49–61 show a composition bias toward polar residues; the sequence is TIDNSNGKQSTTP. The interval 49–320 is disordered; sequence TIDNSNGKQS…RNNESTATTA (272 aa). Positions 72–97 are enriched in pro residues; it reads QPPPQQSQQQPPQPLKPIPATRPVPT. Residues 114–140 show a composition bias toward polar residues; that stretch reads TLPTTNSSTKYSTLPSRQFFEVSSSPG. A compositionally biased stretch (low complexity) spans 157–168; it reads SLSSNQNGSNLN. Residues 208 to 234 show a composition bias toward pro residues; that stretch reads PSPPSPPLQSPQPTPQQQPPPLKPIPQ. Residues 235–264 show a composition bias toward low complexity; it reads PQQQQQQQQQQQQQQQQQQQQQQQQQQQQQ. Residues 265 to 274 show a composition bias toward pro residues; the sequence is QPPPLKPIPQ. A compositionally biased stretch (low complexity) spans 275 to 301; sequence PQQSQPTQPIKSQIQIPITNTNGNTNG. The Protein kinase domain occupies 334–585; that stretch reads KFVGNEIGSG…KVLDTIQNIY (252 aa). Residues 340 to 348 and K361 contribute to the ATP site; that span reads IGSGKYGSV. D454 serves as the catalytic Proton acceptor.

Belongs to the protein kinase superfamily. TKL Ser/Thr protein kinase family.

It carries out the reaction L-seryl-[protein] + ATP = O-phospho-L-seryl-[protein] + ADP + H(+). It catalyses the reaction L-threonyl-[protein] + ATP = O-phospho-L-threonyl-[protein] + ADP + H(+). This Dictyostelium discoideum (Social amoeba) protein is Probable serine/threonine-protein kinase DDB_G0281745.